Here is a 164-residue protein sequence, read N- to C-terminus: Transcription factor E (164 aa).

Residues 5-87 (NDKVIRGYLL…LWRLDFSDIE (83 aa)) enclose the HTH TFE/IIEalpha-type domain.

The protein belongs to the TFE family. In terms of assembly, monomer. Interaction with RNA polymerase subunits RpoF and RpoE is necessary for Tfe stimulatory transcription activity. Able to interact with Tbp and RNA polymerase in the absence of DNA promoter. Interacts both with the preinitiation and elongation complexes.

Its function is as follows. Transcription factor that plays a role in the activation of archaeal genes transcribed by RNA polymerase. Facilitates transcription initiation by enhancing TATA-box recognition by TATA-box-binding protein (Tbp), and transcription factor B (Tfb) and RNA polymerase recruitment. Not absolutely required for transcription in vitro, but particularly important in cases where Tbp or Tfb function is not optimal. It dynamically alters the nucleic acid-binding properties of RNA polymerases by stabilizing the initiation complex and destabilizing elongation complexes. Seems to translocate with the RNA polymerase following initiation and acts by binding to the non template strand of the transcription bubble in elongation complexes. This Methanosarcina barkeri (strain Fusaro / DSM 804) protein is Transcription factor E.